Here is a 163-residue protein sequence, read N- to C-terminus: CDP-archaeol synthase (163 aa).

The next 5 helical transmembrane spans lie at 4 to 24 (LLLGLIYYIPALVANGSAPFI), 52 to 72 (LLLSLTFGTTVGAIISRFLGI), 75 to 95 (IIIGFVESLGAMLGDMLGAFI), 107 to 127 (APILDQLDFILGATVVLISFN), and 128 to 148 (VNLNIYQVVFVCVLVIALHMF).

This sequence belongs to the CDP-archaeol synthase family. The cofactor is Mg(2+).

It is found in the cell membrane. It catalyses the reaction 2,3-bis-O-(geranylgeranyl)-sn-glycerol 1-phosphate + CTP + H(+) = CDP-2,3-bis-O-(geranylgeranyl)-sn-glycerol + diphosphate. It functions in the pathway membrane lipid metabolism; glycerophospholipid metabolism. Functionally, catalyzes the formation of CDP-2,3-bis-(O-geranylgeranyl)-sn-glycerol (CDP-archaeol) from 2,3-bis-(O-geranylgeranyl)-sn-glycerol 1-phosphate (DGGGP) and CTP. This reaction is the third ether-bond-formation step in the biosynthesis of archaeal membrane lipids. The protein is CDP-archaeol synthase of Sulfolobus acidocaldarius (strain ATCC 33909 / DSM 639 / JCM 8929 / NBRC 15157 / NCIMB 11770).